The chain runs to 109 residues: Flagellar hook-basal body complex protein FliE (109 aa).

The disordered stretch occupies residues 1–38; sequence MQAIHNDKSLLSPFSELNTDNRTKREESGNAFKEQKGG. Basic and acidic residues predominate over residues 19–38; it reads TDNRTKREESGNAFKEQKGG.

The protein belongs to the FliE family.

It is found in the bacterial flagellum basal body. This is Flagellar hook-basal body complex protein FliE from Helicobacter pylori (strain G27).